The sequence spans 114 residues: Fumarate reductase subunit D (114 aa).

Helical transmembrane passes span 24–44 (VSAI…PFGL), 50–70 (LITF…TIFP), and 92–112 (GGFI…FAVI).

It belongs to the FrdD family. As to quaternary structure, part of an enzyme complex containing four subunits: a flavoprotein (FrdA), an iron-sulfur protein (FrdB), and two hydrophobic anchor proteins (FrdC and FrdD).

The protein localises to the cell inner membrane. Anchors the catalytic components of the fumarate reductase complex to the cell membrane, binds quinones. This Haemophilus influenzae (strain PittEE) protein is Fumarate reductase subunit D.